Consider the following 586-residue polypeptide: Retron Ec67 protein (586 aa).

One can recognise a Reverse transcriptase domain in the interval 29–262; sequence FLTNVLYRIG…SRQEVTGLTV (234 aa). Residues Asp-120, Asp-201, and Asp-202 each coordinate Mg(2+).

Belongs to the bacterial reverse transcriptase family.

It carries out the reaction DNA(n) + a 2'-deoxyribonucleoside 5'-triphosphate = DNA(n+1) + diphosphate. The catalysed reaction is Endonucleolytic cleavage to 5'-phosphomonoester.. Functionally, reverse transcriptase (RT) component of antiviral defense system retron Ec67, minimally composed of a non-coding RNA (ncRNA) and this RT. Expression of these 2 elements confers protection against bacteriophage T5. At multiplicity of infection (MOI) of 0.02 cultures grow normally when infected with T5 without collapsing, at MOI 2 cultures enter growth stasis. Responsible for synthesis of msDNA-Ec67 (a branched molecule with RNA linked by a 2',5'-phosphodiester bond to ssDNA). The retron transcript serves as primer (from a conserved internal G residue) and template for the reaction, and codes for the RT. Can use other retrons as substrate (msDNA-Mx162 and msDNA-Ec86). Also able to synthesize DNA from a DNA template at least in vitro, although the enzyme is less active with a DNA template. This chain is Retron Ec67 protein, found in Escherichia coli.